The chain runs to 289 residues: MAHDQLHRYLFENYAVRGELVTVNETYQRILTNHDYPAAVQTLLGEMLVATSLLTATLKFSGDITVQLQGDGPLKLAVINGNHLQQMRGVARLQGDIAPGSSLKEMVGNGYLVITITPTDGERYQGVVGLEGETVAECLESYFQQSEQLPTRLFIRTGQHEGNPVAAGMLLQVLPAQDAERNDFDHLAQLTATVKAEELFTLPANEVLYRLYHQEEVTVYEPQDVEFQCHCSRDRCANALMTLSDQEINEMIEQDGEIDMHCDYCGTHYLFNSLDIRAIRHDSSGNLLH.

2 disulfide bridges follow: Cys-229-Cys-231 and Cys-262-Cys-265.

The protein belongs to the HSP33 family. In terms of processing, under oxidizing conditions two disulfide bonds are formed involving the reactive cysteines. Under reducing conditions zinc is bound to the reactive cysteines and the protein is inactive.

The protein localises to the cytoplasm. Functionally, redox regulated molecular chaperone. Protects both thermally unfolding and oxidatively damaged proteins from irreversible aggregation. Plays an important role in the bacterial defense system toward oxidative stress. This is 33 kDa chaperonin from Pectobacterium atrosepticum (strain SCRI 1043 / ATCC BAA-672) (Erwinia carotovora subsp. atroseptica).